The chain runs to 675 residues: PTS system glucose-specific EIICBA component (675 aa).

The PTS EIIC type-1 domain occupies 3–414 (KKFFGQLQRI…FNFKTPGRED (412 aa)). 11 helical membrane-spanning segments follow: residues 16–36 (LMLPVAILPAAGLLLALGNAF), 63–83 (AGGIIFDNLAIIFALGVAIGL), 89–109 (VAAIAAFVGFIVLNKTMGMFL), 126–146 (VLGIPTLQTGVFGGIIIGALA), 170–190 (FVPIMMATCSFILAFPMAIIW), 199–219 (AFSEGLLASNTGLAVFLFGFI), 273–293 (FMQGEFPVMMFGLPAAALAIY), 303–323 (VVAGLMLSGALTSFLTGITEP), 329–349 (LFVAPLLFFIHAVLDGLSFLI), 355–375 (LHLGYTFSGGFIDFFLLGILP), and 383–403 (VIPVGLVYAAIYYIIFRFLIV). The 82-residue stretch at 425–506 (SELPFKVLDA…QQIMDGKITS (82 aa)) folds into the PTS EIIB type-1 domain. Cys447 functions as the Phosphocysteine intermediate; for EIIB activity in the catalytic mechanism. Residues 547-651 (DKVFSEKMMG…STITPIVVTN (105 aa)) enclose the PTS EIIA type-1 domain. His599 acts as the Tele-phosphohistidine intermediate; for EIIA activity in catalysis.

The protein localises to the cell membrane. The enzyme catalyses N(pros)-phospho-L-histidyl-[protein] + D-glucose(out) = D-glucose 6-phosphate(in) + L-histidyl-[protein]. Inhibited by 2-deoxyglucose and methyl beta-D-glucoside, but not by methyl alpha-D-glucoside, p-nitrophenyl alpha-D-glucoside, o-nitrophenyl beta-D-glucoside and salicin. The phosphoenolpyruvate-dependent sugar phosphotransferase system (sugar PTS), a major carbohydrate active transport system, catalyzes the phosphorylation of incoming sugar substrates concomitantly with their translocation across the cell membrane. This system is involved in glucose transport. Cannot transport galactose, fructose, mannose, cellobiose, sucrose, maltose, lactose, melibiose and trehalose, as well as N-acetylglucosamine. In Staphylococcus carnosus (strain TM300), this protein is PTS system glucose-specific EIICBA component (ptsG).